Consider the following 206-residue polypeptide: Guanylyl cyclase inhibitory protein (206 aa).

Gly-2 is lipidated: N-myristoyl glycine. EF-hand domains lie at 31–49, 51–86, 87–122, and 135–170; these read SGLI…VTVG, NSSE…LAHG, TPED…VYKM, and TAEE…DEWV. The Ca(2+) site is built by Asp-64, Asn-66, Asp-68, Glu-75, Asp-100, Asp-102, Asp-104, and Glu-111.

In terms of tissue distribution, retina; inner segments, somata and synaptic terminals of cone receptors.

Does not stimulate guanylyl cyclase (GC) when free calcium ion concentration is low, but inhibits GC when free calcium ions concentration is elevated. The protein is Guanylyl cyclase inhibitory protein (GCIP) of Lithobates pipiens (Northern leopard frog).